A 194-amino-acid chain; its full sequence is Protein GrpE (194 aa).

Residues 1-53 form a disordered region; the sequence is MVENEKTSVEETEEKAETEDEMLTEDPSNEDSDEANEEGNELSEEEKRIAELE. Residues 10–44 show a composition bias toward acidic residues; it reads EETEEKAETEDEMLTEDPSNEDSDEANEEGNELSE.

This sequence belongs to the GrpE family. As to quaternary structure, homodimer.

The protein resides in the cytoplasm. Its function is as follows. Participates actively in the response to hyperosmotic and heat shock by preventing the aggregation of stress-denatured proteins, in association with DnaK and GrpE. It is the nucleotide exchange factor for DnaK and may function as a thermosensor. Unfolded proteins bind initially to DnaJ; upon interaction with the DnaJ-bound protein, DnaK hydrolyzes its bound ATP, resulting in the formation of a stable complex. GrpE releases ADP from DnaK; ATP binding to DnaK triggers the release of the substrate protein, thus completing the reaction cycle. Several rounds of ATP-dependent interactions between DnaJ, DnaK and GrpE are required for fully efficient folding. This chain is Protein GrpE, found in Halalkalibacterium halodurans (strain ATCC BAA-125 / DSM 18197 / FERM 7344 / JCM 9153 / C-125) (Bacillus halodurans).